The primary structure comprises 122 residues: Ribosome-binding factor A (122 aa).

Belongs to the RbfA family. As to quaternary structure, monomer. Binds 30S ribosomal subunits, but not 50S ribosomal subunits or 70S ribosomes.

Its subcellular location is the cytoplasm. One of several proteins that assist in the late maturation steps of the functional core of the 30S ribosomal subunit. Associates with free 30S ribosomal subunits (but not with 30S subunits that are part of 70S ribosomes or polysomes). Required for efficient processing of 16S rRNA. May interact with the 5'-terminal helix region of 16S rRNA. The chain is Ribosome-binding factor A from Pelobacter propionicus (strain DSM 2379 / NBRC 103807 / OttBd1).